The primary structure comprises 1258 residues: Phospholipid-transporting ATPase C887.12 (1258 aa).

Disordered stretches follow at residues 1–41 and 53–83; these read MARD…LGED and YISS…SKAN. Over 1–183 the chain is Cytoplasmic; that stretch reads MARDVDNKQN…PKFLKEQFSK (183 aa). Positions 53-64 are enriched in polar residues; the sequence is YISSSGQNSTNP. A helical membrane pass occupies residues 184-204; it reads YANLFFLFTAVVQQIPGITPV. Over 205-208 the chain is Lumenal; the sequence is NRYT. A helical transmembrane segment spans residues 209 to 229; sequence TIGPMLIVLSVSGIKEIMEDI. The Cytoplasmic portion of the chain corresponds to 230–406; that stretch reads KRKKQDQELN…TSVEKQVNSQ (177 aa). A helical membrane pass occupies residues 407–427; that stretch reads ILFLLCIFVFLCFASSLGALI. Residues 428 to 451 lie on the Lumenal side of the membrane; the sequence is HRSVYGSALSYVKYTSNRAGMFFK. A helical membrane pass occupies residues 452-472; the sequence is GLLTFWILYSNLVPISLFVTF. Residues 473-974 lie on the Cytoplasmic side of the membrane; that stretch reads ELVRYIQAQL…KLILYSFYKN (502 aa). Asp518 functions as the 4-aspartylphosphate intermediate in the catalytic mechanism. 15 residues coordinate ATP: Asp518, Lys519, Thr520, Glu613, Phe654, Ser656, Lys659, Lys677, Arg710, Thr711, Thr790, Gly791, Asp792, Arg883, and Lys889. Asp518 contacts Mg(2+). Position 520 (Thr520) interacts with Mg(2+). Mg(2+) is bound at residue Asp909. Residues Asn912 and Asp913 each contribute to the ATP site. Position 913 (Asp913) interacts with Mg(2+). A helical transmembrane segment spans residues 975–995; that stretch reads IALYMTQFWYAFCNAFSGQVI. Over 996 to 998 the chain is Lumenal; sequence FES. Residues 999 to 1019 form a helical membrane-spanning segment; the sequence is WSISLYNVLFTVLPPVVIGIF. At 1020-1051 the chain is on the cytoplasmic side; sequence DQFVSAGQLFQYPQLYQLGQRSEFFNLKRFWS. Residues 1052-1072 form a helical membrane-spanning segment; the sequence is WITNGFYHSLLLFLCSIAVFY. Over 1073 to 1086 the chain is Lumenal; that stretch reads YDGPNKDGLASGHW. Residues 1087 to 1107 traverse the membrane as a helical segment; it reads VWGTTLYAAILATVLGKAALI. Lys1103 provides a ligand contact to a 1,2-diacyl-sn-glycero-3-phospho-(1D-myo-inositol 4-phosphate). Residues 1108–1115 lie on the Cytoplasmic side of the membrane; that stretch reads SNHWTQYT. A helical transmembrane segment spans residues 1116–1136; it reads VIATLGSFLLWIVFMPIYAVA. Residues 1137-1148 are Lumenal-facing; that stretch reads APAIGFSKEYYG. A helical transmembrane segment spans residues 1149 to 1169; it reads IIPHLYGNLKFWASLLVLPTI. The Cytoplasmic segment spans residues 1170-1258; it reads ALMRDFVWKY…HTRGAYGEMR (89 aa). A 1,2-diacyl-sn-glycero-3-phospho-(1D-myo-inositol 4-phosphate) is bound by residues Arg1173, Trp1177, Lys1178, Tyr1189, and His1190.

This sequence belongs to the cation transport ATPase (P-type) (TC 3.A.3) family. Type IV subfamily. Mg(2+) serves as cofactor.

The protein resides in the endoplasmic reticulum membrane. It is found in the golgi apparatus. It localises to the trans-Golgi network membrane. It catalyses the reaction ATP + H2O + phospholipidSide 1 = ADP + phosphate + phospholipidSide 2.. It carries out the reaction a 1,2-diacyl-sn-glycero-3-phospho-L-serine(out) + ATP + H2O = a 1,2-diacyl-sn-glycero-3-phospho-L-serine(in) + ADP + phosphate + H(+). The catalysed reaction is a 1,2-diacyl-sn-glycero-3-phosphoethanolamine(out) + ATP + H2O = a 1,2-diacyl-sn-glycero-3-phosphoethanolamine(in) + ADP + phosphate + H(+). Functionally, catalytic component of a P4-ATPase flippase complex which catalyzes the hydrolysis of ATP coupled to the transport of phosphatidylserine and small amounts of ethanolamine from the lumen to the cytosolic leaflet of the trans-Golgi network and ensures the maintenance of asymmetric distribution of phospholipids. This is Phospholipid-transporting ATPase C887.12 from Schizosaccharomyces pombe (strain 972 / ATCC 24843) (Fission yeast).